The following is a 73-amino-acid chain: Putative membrane protein insertion efficiency factor (73 aa).

This sequence belongs to the UPF0161 family.

It localises to the cell inner membrane. Could be involved in insertion of integral membrane proteins into the membrane. The sequence is that of Putative membrane protein insertion efficiency factor from Rickettsia bellii (strain RML369-C).